A 799-amino-acid polypeptide reads, in one-letter code: Putative aconitate hydratase, mitochondrial (799 aa).

The transit peptide at 1 to 32 (MVRQLVWQRATASRRLAPKCLSPQQLFARRGL) directs the protein to the mitochondrion. Substrate-binding positions include glutamine 108 and 201-203 (DSH). Residues cysteine 399, cysteine 462, and cysteine 465 each contribute to the [4Fe-4S] cluster site. Residues arginine 489 and arginine 494 each coordinate substrate. Residues 538-564 (KFRPPQGSDLPSAGFADGNPALQPSAG) form a disordered region. Position 685–686 (685–686 (AR)) interacts with substrate.

It belongs to the aconitase/IPM isomerase family.

The protein resides in the mitochondrion. Has no detectable activity towards cis-acontiate or cis-homoaconitate. The chain is Putative aconitate hydratase, mitochondrial (acoB) from Aspergillus fumigatus (strain ATCC MYA-4609 / CBS 101355 / FGSC A1100 / Af293) (Neosartorya fumigata).